The primary structure comprises 230 residues: Large ribosomal subunit protein uL1 (230 aa).

Belongs to the universal ribosomal protein uL1 family. Part of the 50S ribosomal subunit.

Binds directly to 23S rRNA. The L1 stalk is quite mobile in the ribosome, and is involved in E site tRNA release. In terms of biological role, protein L1 is also a translational repressor protein, it controls the translation of the L11 operon by binding to its mRNA. The polypeptide is Large ribosomal subunit protein uL1 (Bradyrhizobium sp. (strain BTAi1 / ATCC BAA-1182)).